The sequence spans 559 residues: Protein QNR-71 (559 aa).

Positions 1–22 are cleaved as a signal peptide; it reads MSQAHRHLALLLPAEAVLCAAA. The Extracellular segment spans residues 23 to 487; it reads MRFQDVLSNG…NGGSSSGTTK (465 aa). 10 N-linked (GlcNAc...) asparagine glycosylation sites follow: Asn92, Asn133, Asn145, Asn149, Asn192, Asn199, Asn248, Asn274, Asn307, and Asn311. In terms of domain architecture, PKD spans 239–326; it reads VSMSQKHDRN…IIPVPCKPVT (88 aa). Residues 329-356 form a disordered region; it reads PSLPTPAVTTDASSNSDPSAPNEMAEDN. The span at 335–347 shows a compositional bias: polar residues; it reads AVTTDASSNSDPS. A glycan (N-linked (GlcNAc...) asparagine) is linked at Asn459. A helical membrane pass occupies residues 488–508; that stretch reads GVFIFLGLLAVFGAIGAFVLY. At 509-559 the chain is on the cytoplasmic side; the sequence is KRYKQYKPIERSAGQAENQEGLSAYVSNFKAFFFPKSTERNPLLKSKPGIV.

This sequence belongs to the PMEL/NMB family. As to expression, melanocyte-specific, restricted to the pigmented layer of the retina and the epidermis.

It is found in the membrane. Functionally, could be involved in melanogenesis. The sequence is that of Protein QNR-71 (QNR-71) from Coturnix japonica (Japanese quail).